We begin with the raw amino-acid sequence, 112 residues long: MNALTSMKCEACQADAPKVSDQELAELIRLIPDWGVEVRDGIMQLERVYKFKNFKLAMAFTNKLADAAEEEGHHPGILTEWGKVTVTWWSHSIKGLHKNDFIMAAKTDQLLD.

This sequence belongs to the pterin-4-alpha-carbinolamine dehydratase family.

The enzyme catalyses (4aS,6R)-4a-hydroxy-L-erythro-5,6,7,8-tetrahydrobiopterin = (6R)-L-erythro-6,7-dihydrobiopterin + H2O. The sequence is that of Putative pterin-4-alpha-carbinolamine dehydratase from Shewanella denitrificans (strain OS217 / ATCC BAA-1090 / DSM 15013).